Here is a 506-residue protein sequence, read N- to C-terminus: Pisatin demethylase (506 aa).

C453 contacts heme.

It belongs to the cytochrome P450 family. It depends on heme as a cofactor.

Can detoxify the phytoalexin pisatin from garden pea. Pisatin is an antimicrobial compound produced by pea in response to infection by plant pathogens. The sequence is that of Pisatin demethylase (PDA6-1) from Fusarium vanettenii (Neocosmospora pisi).